Reading from the N-terminus, the 176-residue chain is MALDLLVVSAGSLALKVLRVTPLITTTILLVNRLAQYFALSTFLPPHTSPKKIDHVGAAFQHWLQTVVPRVWTGVISIVLFTRVALILNLFVRPDDLAGSNARFLYGVGLFLSFAHLSVAPKMLKFEKRMMSPETVPHVAMELLAGWMKVNNIRFWIVDVPFWVVGVWATLEGLKA.

A run of 4 helical transmembrane segments spans residues 5–25 (LLVV…PLIT), 71–91 (VWTG…LNLF), 104–124 (FLYG…PKML), and 155–175 (FWIV…EGLK).

The protein resides in the membrane. It participates in secondary metabolite biosynthesis. Its function is as follows. Part of the gene cluster that mediates the biosynthesis of oxaleimides, cytotoxic compounds containing an unusual disubstituted succinimide moiety. The first step of the pathway is provided by the HR-PKS poxF that serves in a new mode of collaborative biosynthesis with the PKS-NRPS poxE, by providing the olefin containing amino acid substrate via the synthesis of an ACP-bound dec-4-enoate. The cytochrome P450 monooxygenase poxM-catalyzed oxidation at the alpha-position creates the enzyme-bound 2-hydroxydec-4-enoyl-ACP thioester, which may be prone to spontaneous hydrolysis to yield 2-hydroxydec-4-enoic acid due to increased electrophilicity of the carbonyl. 2-hydroxydec-4-enoic acid can then be further oxidized by poxM to yield the alpha-ketoacid 2-oxodec-4-enoicacid, which is reductively aminated by the aminotransferase poxL to yield (S,E)-2-aminodec-4-enoic acid. The Hybrid PKS-NRPS synthetase poxE then performs condensation between the octaketide product of its PKS modules and the amino group of (S,E)-2-aminodec-4-enoic acid which is activated and incorporated by the adenylation domain. The resulting aminoacyl product can be cyclized by the Diels-Alderase PoxQ and reductively released by the reductive (R) domain of poxE to yield an aldehyde intermediate. The released aldehyde is then substrate for a Knoevenagel condensation by the hydrolyase poxO followed by an oxidation at the 5-position of the pyrrolidone ring. The presence of the olefin from the amino acid building block allows for migration of the substituted allyl group to occur. This allylic transposition reaction takes place in a conjugate addition, semipinacol-like fashion to yield a succinimide intermediate. Iterative two-electron oxidations of the C7 methyl of the succinimide intermediate to the carboxylic acid can be catalyzed by one of two remaining cytochrome P450 monooxygenasess poxC or poxD to yield oxaleimide A. Subsequent oxidation yields the maleimide scaffold oxaleimide I. Both oxaleimide A and oxaleimide I can undergo oxidative modifications in the decalin ring to yield the series of products oxaleimides B to H. This chain is Oxaleimides biosynthesis cluster protein N, found in Penicillium oxalicum (strain 114-2 / CGMCC 5302) (Penicillium decumbens).